A 472-amino-acid polypeptide reads, in one-letter code: MAGGVTGGADGTWSDRFEQGLHPFIEVFNASIGFDLTLLQEDLDGSIAHARMLGSCGVISVEEAEQLVQGLETIRSEAHAGTFQPGLADEDVHFAVERRLIALLGPVGKKLHTGRSRNDQVGTDLRLWLRRRLDELEGDLQRLQRALVAQADLHRRTMIPGYTHLQRAQPLCLAHHLLAYVEMLERDRLRLHDVRSRVNICPLGAAALAGTPVPIDRQQTAKALGFDAIYANSLDAVSDRDFCVEFSAAASLVMAHLSRLAEEVIAWASEEFRFVRLSDRCATGSSLMPQKKNPDVPELVRGKCGRVFGHLQGLLTMIKGLPLAYNKDFQEDKEALFDAFRTTRDCIEAMAILFEEGLEFRTERLNTAVEQDFSNATDVADYLVAKGVPFREAYQLVGAVVRRCLDEGCLLRDLSLAAWQELHPAFEADLHDALAPQAVVAARRSEGGTGFDRVDEQLGRWLQHLNGTQPVG.

Belongs to the lyase 1 family. Argininosuccinate lyase subfamily.

Its subcellular location is the cytoplasm. It carries out the reaction 2-(N(omega)-L-arginino)succinate = fumarate + L-arginine. It participates in amino-acid biosynthesis; L-arginine biosynthesis; L-arginine from L-ornithine and carbamoyl phosphate: step 3/3. The sequence is that of Argininosuccinate lyase from Synechococcus sp. (strain CC9902).